A 187-amino-acid chain; its full sequence is uncharacterized protein (187 aa).

4 consecutive transmembrane segments (helical) span residues 29–50, 70–92, 128–147, and 154–176; these read IFID…VYWI, FVIG…INAY, IFFA…SVLR, and LALV…ISYL.

It is found in the cell membrane. This is an uncharacterized protein from Archaeoglobus fulgidus (strain ATCC 49558 / DSM 4304 / JCM 9628 / NBRC 100126 / VC-16).